A 416-amino-acid chain; its full sequence is Tryptophan synthase beta chain (416 aa).

The interval 1-23 (MTSTLPSQPKDMELANSSRPSVH) is disordered. Lys-109 is modified (N6-(pyridoxal phosphate)lysine).

This sequence belongs to the TrpB family. Tetramer of two alpha and two beta chains. Pyridoxal 5'-phosphate serves as cofactor.

It catalyses the reaction (1S,2R)-1-C-(indol-3-yl)glycerol 3-phosphate + L-serine = D-glyceraldehyde 3-phosphate + L-tryptophan + H2O. Its pathway is amino-acid biosynthesis; L-tryptophan biosynthesis; L-tryptophan from chorismate: step 5/5. Its function is as follows. The beta subunit is responsible for the synthesis of L-tryptophan from indole and L-serine. The chain is Tryptophan synthase beta chain from Prochlorococcus marinus (strain MIT 9211).